The following is a 257-amino-acid chain: UPF0758 protein Bcenmc03_2526 (257 aa).

The tract at residues 1-53 (MLSPCPILPSAECRDTADTPADPPGRVIPINRRRRRPGDWRPERPRERLLERG) is disordered. Positions 37-51 (PGDWRPERPRERLLE) are enriched in basic and acidic residues. Positions 135-257 (QIDSPGAVED…TFSFARAGWL (123 aa)) constitute an MPN domain. Residues histidine 206, histidine 208, and aspartate 219 each coordinate Zn(2+). The JAMM motif signature appears at 206-219 (HNHPSGAVQPSAED).

This sequence belongs to the UPF0758 family.

The protein is UPF0758 protein Bcenmc03_2526 of Burkholderia orbicola (strain MC0-3).